A 319-amino-acid polypeptide reads, in one-letter code: ATP-dependent 6-phosphofructokinase (319 aa).

Glycine 11 lines the ATP pocket. Position 21-25 (21-25 (RAVVR)) interacts with ADP. ATP-binding positions include 72–73 (RC) and 102–105 (GDGS). Aspartate 103 serves as a coordination point for Mg(2+). Position 125–127 (125–127 (TID)) interacts with substrate. Catalysis depends on aspartate 127, which acts as the Proton acceptor. Arginine 154 contacts ADP. Substrate-binding positions include arginine 162 and 169–171 (MGR). Residues 185–187 (GAE), arginine 211, and 213–215 (KKH) each bind ADP. Residues glutamate 222, arginine 243, and 249–252 (HVQR) each bind substrate.

Belongs to the phosphofructokinase type A (PFKA) family. ATP-dependent PFK group I subfamily. Prokaryotic clade 'B1' sub-subfamily. As to quaternary structure, homotetramer. Mg(2+) is required as a cofactor.

The protein localises to the cytoplasm. The catalysed reaction is beta-D-fructose 6-phosphate + ATP = beta-D-fructose 1,6-bisphosphate + ADP + H(+). The protein operates within carbohydrate degradation; glycolysis; D-glyceraldehyde 3-phosphate and glycerone phosphate from D-glucose: step 3/4. Allosterically activated by ADP and other diphosphonucleosides, and allosterically inhibited by phosphoenolpyruvate. In terms of biological role, catalyzes the phosphorylation of D-fructose 6-phosphate to fructose 1,6-bisphosphate by ATP, the first committing step of glycolysis. The chain is ATP-dependent 6-phosphofructokinase from Bacillus mycoides (strain KBAB4) (Bacillus weihenstephanensis).